We begin with the raw amino-acid sequence, 300 residues long: UDP-N-acetylenolpyruvoylglucosamine reductase (300 aa).

Residues 30–194 enclose the FAD-binding PCMH-type domain; sequence KVGGAADFFV…VGATFRLDPA (165 aa). R174 is a catalytic residue. The active-site Proton donor is the S223. E293 is an active-site residue.

Belongs to the MurB family. FAD serves as cofactor.

It is found in the cytoplasm. It catalyses the reaction UDP-N-acetyl-alpha-D-muramate + NADP(+) = UDP-N-acetyl-3-O-(1-carboxyvinyl)-alpha-D-glucosamine + NADPH + H(+). It participates in cell wall biogenesis; peptidoglycan biosynthesis. In terms of biological role, cell wall formation. This is UDP-N-acetylenolpyruvoylglucosamine reductase from Geobacter metallireducens (strain ATCC 53774 / DSM 7210 / GS-15).